Here is a 374-residue protein sequence, read N- to C-terminus: MGIKGLTALISDEAPGAIKEMEIKTYFGRKVAIDASMSLYQFLIAVRQNDGQQLMTESGETTSHLLGFFYRTLRMIDYGIKPMYVFDGTPPDLKKELLQKRFGRREEAREQEEEQKDVADAEKMDQLARRQVRPTRQHNEEVRHLLKLMGIPCVIAPSEAEAQCAELARAGKVYAAGSEDMDTLTFGTPILLKHLTASEQKKLPVHQVDLAKALEGLQMTMAQFIDLCILLGCDYLDPIKGIGPKTALKLIREHKTLENVVHHLKEDGKKSVQIPDHWPFQEARKIFESPDVQKGVDLDLKWEAPDVEAMVKFLCQDKGFSEDRVRKGCEKLQKSLSQKQQGRLDGFFTVKPGSAPPKRKAEDDKKNVKKKGKK.

Positions 1–105 (MGIKGLTALI…ELLQKRFGRR (105 aa)) are N-domain. Position 34 (Asp34) interacts with Mg(2+). 2 residues coordinate DNA: Arg47 and Arg71. Residue Asp87 coordinates Mg(2+). The interval 103–122 (GRREEAREQEEEQKDVADAE) is disordered. The tract at residues 123–254 (KMDQLARRQV…KTALKLIREH (132 aa)) is I-domain. 4 residues coordinate Mg(2+): Glu159, Glu161, Asp180, and Asp182. Residue Glu159 participates in DNA binding. 2 residues coordinate DNA: Gly232 and Asp234. Asp234 serves as a coordination point for Mg(2+). The interval 335–374 (SLSQKQQGRLDGFFTVKPGSAPPKRKAEDDKKNVKKKGKK) is disordered. The tract at residues 340-348 (QQGRLDGFF) is interaction with PCNA.

This sequence belongs to the XPG/RAD2 endonuclease family. FEN1 subfamily. As to quaternary structure, interacts with PCNA. Three molecules of FEN1 bind to one PCNA trimer with each molecule binding to one PCNA monomer. PCNA stimulates the nuclease activity without altering cleavage specificity. Requires Mg(2+) as cofactor. Post-translationally, phosphorylated. Phosphorylation upon DNA damage induces relocalization to the nuclear plasma.

The protein resides in the nucleus. It is found in the nucleolus. It localises to the nucleoplasm. Its subcellular location is the mitochondrion. In terms of biological role, structure-specific nuclease with 5'-flap endonuclease and 5'-3' exonuclease activities involved in DNA replication and repair. During DNA replication, cleaves the 5'-overhanging flap structure that is generated by displacement synthesis when DNA polymerase encounters the 5'-end of a downstream Okazaki fragment. It enters the flap from the 5'-end and then tracks to cleave the flap base, leaving a nick for ligation. Also involved in the long patch base excision repair (LP-BER) pathway, by cleaving within the apurinic/apyrimidinic (AP) site-terminated flap. Acts as a genome stabilization factor that prevents flaps from equilibrating into structures that lead to duplications and deletions. Also possesses 5'-3' exonuclease activity on nicked or gapped double-stranded DNA, and exhibits RNase H activity. Also involved in replication and repair of rDNA and in repairing mitochondrial DNA. The protein is Flap endonuclease 1 of Mycosarcoma maydis (Corn smut fungus).